We begin with the raw amino-acid sequence, 419 residues long: Argininosuccinate synthase (419 aa).

9–17 provides a ligand contact to ATP; sequence AYSGGLDTS. An L-citrulline-binding site is contributed by Tyr87. An ATP-binding site is contributed by Gly117. Residues Thr119, Asn123, and Asp124 each contribute to the L-aspartate site. Asn123 is a binding site for L-citrulline. L-citrulline-binding residues include Arg127, Ser175, Ser184, Glu260, and Tyr272.

Belongs to the argininosuccinate synthase family. Type 1 subfamily. Homotetramer.

Its subcellular location is the cytoplasm. The enzyme catalyses L-citrulline + L-aspartate + ATP = 2-(N(omega)-L-arginino)succinate + AMP + diphosphate + H(+). It functions in the pathway amino-acid biosynthesis; L-arginine biosynthesis; L-arginine from L-ornithine and carbamoyl phosphate: step 2/3. The chain is Argininosuccinate synthase from Brevibacillus brevis (strain 47 / JCM 6285 / NBRC 100599).